A 159-amino-acid polypeptide reads, in one-letter code: NADH-quinone oxidoreductase subunit I (159 aa).

4Fe-4S ferredoxin-type domains lie at 51 to 80 and 90 to 119; these read RRYENGEERCIACKLCEAICPAQAIVIEAD and TRYDIDMTKCIYCGLCQEACPVDAIVEGPN. C60, C63, C66, C70, C99, C102, C105, and C109 together coordinate [4Fe-4S] cluster.

This sequence belongs to the complex I 23 kDa subunit family. NDH-1 is composed of 14 different subunits. Subunits NuoA, H, J, K, L, M, N constitute the membrane sector of the complex. Requires [4Fe-4S] cluster as cofactor.

Its subcellular location is the cell membrane. It carries out the reaction a quinone + NADH + 5 H(+)(in) = a quinol + NAD(+) + 4 H(+)(out). NDH-1 shuttles electrons from NADH, via FMN and iron-sulfur (Fe-S) centers, to quinones in the respiratory chain. The immediate electron acceptor for the enzyme in this species is believed to be ubiquinone. Couples the redox reaction to proton translocation (for every two electrons transferred, four hydrogen ions are translocated across the cytoplasmic membrane), and thus conserves the redox energy in a proton gradient. This chain is NADH-quinone oxidoreductase subunit I, found in Rickettsia africae (strain ESF-5).